We begin with the raw amino-acid sequence, 237 residues long: Uridylate kinase (237 aa).

An ATP-binding site is contributed by 10-13 (KLSG). Glycine 51 contributes to the UMP binding site. 2 residues coordinate ATP: glycine 52 and arginine 56. Residues aspartate 71 and 132–139 (MGMPFFST) contribute to the UMP site. 3 residues coordinate ATP: asparagine 160, tyrosine 166, and aspartate 169.

The protein belongs to the UMP kinase family. In terms of assembly, homohexamer.

The protein resides in the cytoplasm. The catalysed reaction is UMP + ATP = UDP + ADP. Its pathway is pyrimidine metabolism; CTP biosynthesis via de novo pathway; UDP from UMP (UMPK route): step 1/1. With respect to regulation, inhibited by UTP. Functionally, catalyzes the reversible phosphorylation of UMP to UDP. In Nocardioides sp. (strain ATCC BAA-499 / JS614), this protein is Uridylate kinase.